A 351-amino-acid chain; its full sequence is Heat-inducible transcription repressor HrcA (351 aa).

Belongs to the HrcA family.

Its function is as follows. Negative regulator of class I heat shock genes (grpE-dnaK-dnaJ and groELS operons). Prevents heat-shock induction of these operons. This chain is Heat-inducible transcription repressor HrcA, found in Mycoplasma pneumoniae (strain ATCC 29342 / M129 / Subtype 1) (Mycoplasmoides pneumoniae).